A 276-amino-acid polypeptide reads, in one-letter code: Small ribosomal subunit protein uS2 (276 aa).

2 disordered regions span residues Ala209 to Val233 and Val252 to Glu276. Low complexity predominate over residues Glu211–Ala231.

This sequence belongs to the universal ribosomal protein uS2 family. In terms of assembly, component of the small ribosomal subunit. Mature ribosomes consist of a small (40S) and a large (60S) subunit. The 40S subunit contains about 33 different proteins and 1 molecule of RNA (18S). The 60S subunit contains about 49 different proteins and 3 molecules of RNA (25S, 5.8S and 5S). Interacts with RPS21.

Its subcellular location is the cytoplasm. Its function is as follows. Required for the assembly and/or stability of the 40S ribosomal subunit. Required for the processing of the 20S rRNA-precursor to mature 18S rRNA in a late step of the maturation of 40S ribosomal subunits. This chain is Small ribosomal subunit protein uS2, found in Mycosarcoma maydis (Corn smut fungus).